The primary structure comprises 70 residues: Protein SlyX homolog (70 aa).

The protein belongs to the SlyX family.

This chain is Protein SlyX homolog, found in Shewanella sp. (strain MR-7).